A 91-amino-acid polypeptide reads, in one-letter code: UPF0147 protein APE_2336a (91 aa).

This sequence belongs to the UPF0147 family.

The protein is UPF0147 protein APE_2336a of Aeropyrum pernix (strain ATCC 700893 / DSM 11879 / JCM 9820 / NBRC 100138 / K1).